Here is a 131-residue protein sequence, read N- to C-terminus: Sulfurtransferase TusD (131 aa).

The active-site Cysteine persulfide intermediate is Cys81.

This sequence belongs to the DsrE/TusD family. In terms of assembly, heterohexamer, formed by a dimer of trimers. The hexameric TusBCD complex contains 2 copies each of TusB, TusC and TusD. The TusBCD complex interacts with TusE.

It is found in the cytoplasm. Functionally, part of a sulfur-relay system required for 2-thiolation of 5-methylaminomethyl-2-thiouridine (mnm(5)s(2)U) at tRNA wobble positions. Accepts sulfur from TusA and transfers it in turn to TusE. This is Sulfurtransferase TusD from Yersinia pseudotuberculosis serotype O:1b (strain IP 31758).